Consider the following 260-residue polypeptide: Putative ABC transporter ATP-binding protein SCO3161 (260 aa).

The ABC transporter domain occupies leucine 16–glutamate 246. An ATP-binding site is contributed by glycine 49–threonine 56.

Belongs to the ABC transporter superfamily.

Its subcellular location is the cell membrane. Probably part of an ABC transporter complex. Responsible for energy coupling to the transport system. The protein is Putative ABC transporter ATP-binding protein SCO3161 of Streptomyces coelicolor (strain ATCC BAA-471 / A3(2) / M145).